A 468-amino-acid polypeptide reads, in one-letter code: Methionine aminopeptidase 2 (468 aa).

Residues 1-10 (MGSKTFEGEG) show a composition bias toward basic and acidic residues. The disordered stretch occupies residues 1 to 106 (MGSKTFEGEG…PPRVPLDDLF (106 aa)). Residues 16–25 (DPSNSTSPNS) are compositionally biased toward polar residues. Positions 31-40 (RGAHLSRDGD) are enriched in basic and acidic residues. The span at 46-56 (GDGDDGADGDE) shows a compositional bias: acidic residues. The segment covering 61-75 (VTTTPLTEQQPSSET) has biased composition (polar residues). A compositionally biased stretch (basic residues) spans 78 to 90 (KKKKRRKPKKKIS). Substrate is bound at residue H219. The a divalent metal cation site is built by D240, D251, and H320. Residue H328 coordinates substrate. A divalent metal cation contacts are provided by E353 and E449.

The protein belongs to the peptidase M24A family. Methionine aminopeptidase eukaryotic type 2 subfamily. Requires Co(2+) as cofactor. The cofactor is Zn(2+). It depends on Mn(2+) as a cofactor. Fe(2+) is required as a cofactor.

It is found in the cytoplasm. It carries out the reaction Release of N-terminal amino acids, preferentially methionine, from peptides and arylamides.. Cotranslationally removes the N-terminal methionine from nascent proteins. The N-terminal methionine is often cleaved when the second residue in the primary sequence is small and uncharged (Met-Ala-, Cys, Gly, Pro, Ser, Thr, or Val). The polypeptide is Methionine aminopeptidase 2 (Aspergillus oryzae (strain ATCC 42149 / RIB 40) (Yellow koji mold)).